The following is a 209-amino-acid chain: Uracil phosphoribosyltransferase (209 aa).

5-phospho-alpha-D-ribose 1-diphosphate is bound by residues Arg79, Arg104, and Asp131–Ser139. Uracil contacts are provided by residues Ile194 and Gly199–Ala201. Asp200 serves as a coordination point for 5-phospho-alpha-D-ribose 1-diphosphate.

It belongs to the UPRTase family. Mg(2+) serves as cofactor.

It carries out the reaction UMP + diphosphate = 5-phospho-alpha-D-ribose 1-diphosphate + uracil. It participates in pyrimidine metabolism; UMP biosynthesis via salvage pathway; UMP from uracil: step 1/1. Its activity is regulated as follows. Allosterically activated by GTP. Its function is as follows. Catalyzes the conversion of uracil and 5-phospho-alpha-D-ribose 1-diphosphate (PRPP) to UMP and diphosphate. The polypeptide is Uracil phosphoribosyltransferase (Clostridium beijerinckii (strain ATCC 51743 / NCIMB 8052) (Clostridium acetobutylicum)).